The sequence spans 365 residues: Galactoside alpha-(1,2)-fucosyltransferase 1 (365 aa).

At 1-8 (MWPLSHRH) the chain is on the cytoplasmic side. A helical; Signal-anchor for type II membrane protein transmembrane segment spans residues 9 to 25 (LCLAFLLVCVLSAISFF). Residues 26–365 (LHIYQDSIRH…LSPLWTLAEP (340 aa)) are Lumenal-facing. 3 N-linked (GlcNAc...) asparagine glycosylation sites follow: asparagine 65, asparagine 301, and asparagine 327.

Belongs to the glycosyltransferase 11 family.

It is found in the golgi apparatus. The protein localises to the golgi stack membrane. The catalysed reaction is a beta-D-galactosyl-(1-&gt;4)-N-acetyl-beta-D-glucosaminyl derivative + GDP-beta-L-fucose = an alpha-L-Fuc-(1-&gt;2)-beta-D-Gal-(1-&gt;4)-beta-D-GlcNAc derivative + GDP + H(+). The enzyme catalyses a ganglioside GA1 + GDP-beta-L-fucose = a ganglioside Fuc-GA1 + GDP + H(+). It catalyses the reaction a beta-D-Gal-(1-&gt;3)-beta-D-GlcNAc-(1-&gt;3)-beta-D-Gal-(1-&gt;4)-beta-D-Glc-(1&lt;-&gt;1')-Cer(d18:1(4E)) + GDP-beta-L-fucose = alpha-L-fucosyl-(1-&gt;2)- beta-D-galactosyl-(1-&gt;3)-N-acetyl-beta-D-glucosaminyl-(1-&gt;3)-beta-D-galactosyl-(1-&gt;4)-beta-D-glucosyl-(1&lt;-&gt;1')-N-acylsphing-4-enine + GDP + H(+). It carries out the reaction a neolactoside nLc4Cer(d18:1(4E)) + GDP-beta-L-fucose = a neolactoside IV(2)-alpha-Fuc-nLc4Cer(d18:1(4E)) + GDP + H(+). The catalysed reaction is a ganglioside GM1 + GDP-beta-L-fucose = a ganglioside Fuc-GM1 + GDP + H(+). The enzyme catalyses beta-D-galactosyl-(1-&gt;3)-N-acetyl-D-galactosamine + GDP-beta-L-fucose = alpha-L-fucosyl-(1-&gt;2)-beta-D-galactosyl-(1-&gt;3)-N-acetyl-D-galactosamine + GDP + H(+). It functions in the pathway protein modification; protein glycosylation. Catalyzes the transfer of L-fucose, from a guanosine diphosphate-beta-L-fucose, to the terminal galactose residue of glycoconjugates through an alpha(1,2) linkage leading to H antigen synthesis that is an intermediate substrate in the synthesis of ABO blood group antigens. H antigen is essential for maturation of the glomerular layer of the main olfactory bulb, in cell migration and early cell-cell contacts during tumor associated angiogenesis. Preferentially fucosylates soluble lactose and to a lesser extent fucosylates glycolipids gangliosides GA1 and GM1a. The polypeptide is Galactoside alpha-(1,2)-fucosyltransferase 1 (Mico humeralifer (Black and white tassel-ear marmoset)).